A 556-amino-acid chain; its full sequence is Formate--tetrahydrofolate ligase (556 aa).

65–72 (TPAGEGKS) is an ATP binding site.

Belongs to the formate--tetrahydrofolate ligase family.

It catalyses the reaction (6S)-5,6,7,8-tetrahydrofolate + formate + ATP = (6R)-10-formyltetrahydrofolate + ADP + phosphate. Its pathway is one-carbon metabolism; tetrahydrofolate interconversion. This is Formate--tetrahydrofolate ligase from Streptococcus equi subsp. equi (strain 4047).